Here is a 403-residue protein sequence, read N- to C-terminus: uncharacterized protein (403 aa).

The next 2 membrane-spanning stretches (helical) occupy residues 29 to 49 and 55 to 75; these read FVIFSVLFSLIIGFIASCGFL and AFIASGLCFALLVSVVSFFGC.

It belongs to the chlamydial CPn_0129/CT_036/TC_0306 family.

It localises to the cell membrane. This is an uncharacterized protein from Chlamydia trachomatis serovar D (strain ATCC VR-885 / DSM 19411 / UW-3/Cx).